A 230-amino-acid polypeptide reads, in one-letter code: Small ribosomal subunit protein uS3c (230 aa).

Residues 39-109 (IRSFIHSKLS…QLRVNVVEIA (71 aa)) form the KH type-2 domain.

This sequence belongs to the universal ribosomal protein uS3 family. Part of the 30S ribosomal subunit.

The protein localises to the plastid. Its subcellular location is the chloroplast. The protein is Small ribosomal subunit protein uS3c (rps3) of Pyropia yezoensis (Susabi-nori).